Here is a 229-residue protein sequence, read N- to C-terminus: GTP cyclohydrolase 1 (229 aa).

A disordered region spans residues 1-31 (MFRESDNTIAPSNQDLNKPVVDKEQPAERTP). Polar residues predominate over residues 7–16 (NTIAPSNQDL). Zn(2+) is bound by residues Cys-117, His-120, and Cys-188.

Belongs to the GTP cyclohydrolase I family. Toroid-shaped homodecamer, composed of two pentamers of five dimers.

It carries out the reaction GTP + H2O = 7,8-dihydroneopterin 3'-triphosphate + formate + H(+). The protein operates within cofactor biosynthesis; 7,8-dihydroneopterin triphosphate biosynthesis; 7,8-dihydroneopterin triphosphate from GTP: step 1/1. The chain is GTP cyclohydrolase 1 from Rhodopirellula baltica (strain DSM 10527 / NCIMB 13988 / SH1).